Consider the following 445-residue polypeptide: Probable D-serine dehydratase (445 aa).

Lys-116 is modified (N6-(pyridoxal phosphate)lysine).

This sequence belongs to the serine/threonine dehydratase family. DsdA subfamily. The cofactor is pyridoxal 5'-phosphate.

The enzyme catalyses D-serine = pyruvate + NH4(+). The chain is Probable D-serine dehydratase from Bacillus mycoides (strain KBAB4) (Bacillus weihenstephanensis).